Reading from the N-terminus, the 520-residue chain is Cholesterol side-chain cleavage enzyme, mitochondrial (520 aa).

A mitochondrion-targeting transit peptide spans 1–36; it reads MLAKGLSLRSVLAKGCQPFLSPTWQSSVLATGGGAN. Cys-458 is a binding site for heme.

It belongs to the cytochrome P450 family. In terms of assembly, interacts with FDX1/adrenodoxin. Requires heme as cofactor.

The protein localises to the mitochondrion inner membrane. The catalysed reaction is 6 reduced [adrenodoxin] + cholesterol + 3 O2 + 6 H(+) = 4-methylpentanal + pregnenolone + 6 oxidized [adrenodoxin] + 4 H2O. It carries out the reaction 2 reduced [adrenodoxin] + cholesterol + O2 + 2 H(+) = (22R)-hydroxycholesterol + 2 oxidized [adrenodoxin] + H2O. The enzyme catalyses (22R)-hydroxycholesterol + 2 reduced [adrenodoxin] + O2 + 2 H(+) = (20R,22R)-20,22-dihydroxycholesterol + 2 oxidized [adrenodoxin] + H2O. It catalyses the reaction (20R,22R)-20,22-dihydroxycholesterol + 2 reduced [adrenodoxin] + O2 + 2 H(+) = 4-methylpentanal + pregnenolone + 2 oxidized [adrenodoxin] + 2 H2O. It participates in lipid metabolism; C21-steroid hormone metabolism. It functions in the pathway steroid metabolism; cholesterol metabolism. In terms of biological role, a cytochrome P450 monooxygenase that catalyzes the side-chain hydroxylation and cleavage of cholesterol to pregnenolone, the precursor of most steroid hormones. Catalyzes three sequential oxidation reactions of cholesterol, namely the hydroxylation at C22 followed with the hydroxylation at C20 to yield 20R,22R-hydroxycholesterol that is further cleaved between C20 and C22 to yield the C21-steroid pregnenolone and 4-methylpentanal. Mechanistically, uses molecular oxygen inserting one oxygen atom into a substrate and reducing the second into a water molecule. Two electrons are provided by NADPH via a two-protein mitochondrial transfer system comprising flavoprotein FDXR (adrenodoxin/ferredoxin reductase) and nonheme iron-sulfur protein FDX1 or FDX2 (adrenodoxin/ferredoxin). The polypeptide is Cholesterol side-chain cleavage enzyme, mitochondrial (CYP11A1) (Mesocricetus auratus (Golden hamster)).